Reading from the N-terminus, the 207-residue chain is Large ribosomal subunit protein uL4 (207 aa).

The interval A49–A73 is disordered.

It belongs to the universal ribosomal protein uL4 family. In terms of assembly, part of the 50S ribosomal subunit.

Functionally, one of the primary rRNA binding proteins, this protein initially binds near the 5'-end of the 23S rRNA. It is important during the early stages of 50S assembly. It makes multiple contacts with different domains of the 23S rRNA in the assembled 50S subunit and ribosome. Its function is as follows. Forms part of the polypeptide exit tunnel. The polypeptide is Large ribosomal subunit protein uL4 (Helicobacter hepaticus (strain ATCC 51449 / 3B1)).